A 516-amino-acid chain; its full sequence is Sodium channel protein Nach (516 aa).

Residues 1–49 (MGHEEELSPEQVDLKVSPLMGSLKRTWNDFCATSSIHGLRYTRDEDTNR) lie on the Cytoplasmic side of the membrane. The helical transmembrane segment at 50 to 70 (IVHFVWLLISLVMFICAVVMA) threads the bilayer. Residues 71-452 (RTFYIDFRSN…LVSNLGSAFS (382 aa)) lie on the Extracellular side of the membrane. Asparagine 128, asparagine 165, asparagine 220, and asparagine 348 each carry an N-linked (GlcNAc...) asparagine glycan. The helical transmembrane segment at 453-473 (LFVGMSMLSVVEIMYYFSVIL) threads the bilayer. Topologically, residues 474–516 (RKNYVLECEARKKMLHKGPKFAWPKANDSHSKHQKSVFIIHKM) are cytoplasmic.

The protein belongs to the amiloride-sensitive sodium channel (TC 1.A.6) family.

It is found in the membrane. Functionally, part of a complex that plays a role in tracheal liquid clearance. Probable role in sodium transport. This is Sodium channel protein Nach (Nach) from Drosophila ananassae (Fruit fly).